Here is a 143-residue protein sequence, read N- to C-terminus: Large ribosomal subunit protein uL13 (143 aa).

Belongs to the universal ribosomal protein uL13 family. In terms of assembly, part of the 50S ribosomal subunit.

In terms of biological role, this protein is one of the early assembly proteins of the 50S ribosomal subunit, although it is not seen to bind rRNA by itself. It is important during the early stages of 50S assembly. The sequence is that of Large ribosomal subunit protein uL13 from Methylacidiphilum infernorum (isolate V4) (Methylokorus infernorum (strain V4)).